A 350-amino-acid chain; its full sequence is Uroporphyrinogen decarboxylase (350 aa).

Substrate-binding positions include 28–32 (RQAGR), aspartate 78, tyrosine 155, serine 210, and histidine 325.

Belongs to the uroporphyrinogen decarboxylase family. As to quaternary structure, homodimer.

Its subcellular location is the cytoplasm. The enzyme catalyses uroporphyrinogen III + 4 H(+) = coproporphyrinogen III + 4 CO2. It participates in porphyrin-containing compound metabolism; protoporphyrin-IX biosynthesis; coproporphyrinogen-III from 5-aminolevulinate: step 4/4. In terms of biological role, catalyzes the decarboxylation of four acetate groups of uroporphyrinogen-III to yield coproporphyrinogen-III. In Trichormus variabilis (strain ATCC 29413 / PCC 7937) (Anabaena variabilis), this protein is Uroporphyrinogen decarboxylase.